Consider the following 295-residue polypeptide: MRIESMNAIQAIAIAILQGATELFPVSSLGHAVVLPALLGWSLPQHSQTFLPFLVFLHLGTAAALLLYFWRDWWALFSGVIGFAPAHHVPQARRIFMLLVVATLPAIVVGGLLEHMLRALFESAPIAAFFLVVNGGLLLFGEKLRGAASPYPQTSDHEVTERRALSTLTVMDAFTIGCWQCAALIPGISRSGATIVGGLLRGIDHEASAHFSFLIALPIILGATVLEVPKLLHADIAPGVFQTAALAAVAAGITAWLSTAFLMRYFRDHDSWALKPFAFYCIIAGLGALAWLHFA.

Helical transmembrane passes span 12-34 (IAIA…HAVV), 50-70 (FLPF…LYFW), 95-115 (IFML…LLEH), 120-140 (LFES…LLLF), 209-229 (AHFS…LEVP), 243-263 (TAAL…AFLM), and 272-292 (WALK…LAWL).

The protein belongs to the UppP family.

The protein resides in the cell inner membrane. The enzyme catalyses di-trans,octa-cis-undecaprenyl diphosphate + H2O = di-trans,octa-cis-undecaprenyl phosphate + phosphate + H(+). Functionally, catalyzes the dephosphorylation of undecaprenyl diphosphate (UPP). Confers resistance to bacitracin. The chain is Undecaprenyl-diphosphatase from Granulibacter bethesdensis (strain ATCC BAA-1260 / CGDNIH1).